We begin with the raw amino-acid sequence, 102 residues long: Auxin-responsive protein SAUR68 (102 aa).

This sequence belongs to the ARG7 family.

Its subcellular location is the cell membrane. May promote auxin-stimulated organ elongation, such as hypocotyls, stamen filaments and petals. This Arabidopsis thaliana (Mouse-ear cress) protein is Auxin-responsive protein SAUR68.